Here is a 555-residue protein sequence, read N- to C-terminus: MMSESEARPTNFIRQIIDADLDSGKHKSVHTRFPPEPNGYLHIGHAKSICLNFGIAQDYQGQCNLRFDDTNPEKEDIEYVESIKNDVNWLGFDWSGEICYSSNYFDKLYGFAVELINKGLAYVDELSPEQMREYRGNLTEPGKPSPYRDRSVAENLELFEKMKNGEVEEGIMSLRAKIDMASSFMVLRDPVIYRVRFATHHQTGDKWCIYPMYDFTHCISDALEGITHSICTLEFQDNRRLYDWVLDNITIDCQPRQYEFSRLNLEYTVMSKRKLNQLVTDNLVSGWDDPRMPTVSGLRRRGFTSASIREFCKRIGVTKQENTIEMSSLESCIRDDLNENAPRAMAVLDPVKIVIENFTGDTEVLTVSNHPNNSEMGTREVPFTREIWIEREDFREEANKKYKRLVLGKEVRLRGAYVIKAERIEKDAEGNITTIFCSYDNETLGVNPSDGRKVKGVIHWVSADAGLPAEIRLYDRLFTVANPAAADDFVTVINPESLTVLNGFVEPSLKVAEAEKAFQFERIGYFCVDSKDSSAEKLVFNRTVGLRDTWAKMGE.

The 'HIGH' region motif lies at 35-45; the sequence is PEPNGYLHIGH. ATP is bound by residues 36 to 38 and 42 to 48; these read EPN and HIGHAKS. L-glutamine contacts are provided by Asp68 and Tyr213. ATP contacts are provided by residues Thr232, 262–263, and 270–272; these read RL and MSK. The 'KMSKS' region signature appears at 269-273; that stretch reads VMSKR.

This sequence belongs to the class-I aminoacyl-tRNA synthetase family. As to quaternary structure, monomer.

The protein resides in the cytoplasm. It catalyses the reaction tRNA(Gln) + L-glutamine + ATP = L-glutaminyl-tRNA(Gln) + AMP + diphosphate. This Photobacterium profundum (strain SS9) protein is Glutamine--tRNA ligase.